A 353-amino-acid polypeptide reads, in one-letter code: Protein MGF 360-11L (353 aa).

One copy of the ANK repeat lies at 59-88; sequence ELNTVLMKAAKENNHDLIRLFVEWGADINY.

The protein belongs to the asfivirus MGF 360 family. In terms of assembly, interacts with host TBK1 ad IRF7.

In terms of biological role, plays a role in virus cell tropism, and may be required for efficient virus replication in macrophages. In addition, inhibits the phosphorylation of host TBK1 and IRF7 and thereby negatively regulates the host cGAS signaling pathway and antagonizes IFN-mediated antiviral activity. This African swine fever virus (isolate Pig/Kenya/KEN-50/1950) (ASFV) protein is Protein MGF 360-11L.